The primary structure comprises 143 residues: Sec-independent protein translocase protein TatB (143 aa).

A helical membrane pass occupies residues 2 to 22 (FGNIGWGEFMVLLVAALVILG). The tract at residues 97 to 143 (FDKPGSVSFDKSNPGTKAVSADPSTPTAPQNKPLAAGERPPIDLDAT) is disordered.

The protein belongs to the TatB family. In terms of assembly, the Tat system comprises two distinct complexes: a TatABC complex, containing multiple copies of TatA, TatB and TatC subunits, and a separate TatA complex, containing only TatA subunits. Substrates initially bind to the TatABC complex, which probably triggers association of the separate TatA complex to form the active translocon.

The protein resides in the cell membrane. Functionally, part of the twin-arginine translocation (Tat) system that transports large folded proteins containing a characteristic twin-arginine motif in their signal peptide across membranes. Together with TatC, TatB is part of a receptor directly interacting with Tat signal peptides. TatB may form an oligomeric binding site that transiently accommodates folded Tat precursor proteins before their translocation. The polypeptide is Sec-independent protein translocase protein TatB (Rhodococcus opacus (strain B4)).